The following is a 350-amino-acid chain: Probable 2-dehydropantoate 2-reductase (350 aa).

NADP(+) contacts are provided by residues 9–14 (GAGSIG) and N115. N115 serves as a coordination point for substrate. The active-site Proton donor is K213. N217, N221, and S295 together coordinate substrate. An NADP(+)-binding site is contributed by E307.

This sequence belongs to the ketopantoate reductase family.

The catalysed reaction is (R)-pantoate + NADP(+) = 2-dehydropantoate + NADPH + H(+). It functions in the pathway cofactor biosynthesis; (R)-pantothenate biosynthesis; (R)-pantoate from 3-methyl-2-oxobutanoate: step 2/2. In terms of biological role, catalyzes the NADPH-dependent reduction of ketopantoate into pantoic acid. The chain is Probable 2-dehydropantoate 2-reductase from Schizosaccharomyces pombe (strain 972 / ATCC 24843) (Fission yeast).